A 967-amino-acid polypeptide reads, in one-letter code: Kinesin-like protein KIF28P (967 aa).

In terms of domain architecture, Kinesin motor spans 7–355 (DSVKAVRVRP…LRYAERERKI (349 aa)). 111–118 (GQTGSGKS) lines the ATP pocket. The FHA domain maps to 410–472 (APCPRPALSP…LQHLDRLILG (63 aa)). Residues 822–851 (NQIPELYLKLLKLEQETEPLRNINRALREE) are a coiled coil.

The protein belongs to the TRAFAC class myosin-kinesin ATPase superfamily. Kinesin family.

It is found in the mitochondrion membrane. In terms of biological role, microtubule-dependent motor protein required for mitochondrion morphology and transport of mitochondria in neuronal cells. This is Kinesin-like protein KIF28P (KIF28P) from Homo sapiens (Human).